A 357-amino-acid chain; its full sequence is Heat-inducible transcription repressor HrcA (357 aa).

It belongs to the HrcA family.

Negative regulator of class I heat shock genes (grpE-dnaK-dnaJ and groELS operons). Prevents heat-shock induction of these operons. This is Heat-inducible transcription repressor HrcA from Chlorobium phaeovibrioides (strain DSM 265 / 1930) (Prosthecochloris vibrioformis (strain DSM 265)).